Consider the following 266-residue polypeptide: tRNA (guanine-N(1)-)-methyltransferase (266 aa).

S-adenosyl-L-methionine contacts are provided by residues glycine 113 and 137–142 (LGDYVL).

It belongs to the RNA methyltransferase TrmD family. As to quaternary structure, homodimer.

It is found in the cytoplasm. The catalysed reaction is guanosine(37) in tRNA + S-adenosyl-L-methionine = N(1)-methylguanosine(37) in tRNA + S-adenosyl-L-homocysteine + H(+). Its function is as follows. Specifically methylates guanosine-37 in various tRNAs. In Paenarthrobacter aurescens (strain TC1), this protein is tRNA (guanine-N(1)-)-methyltransferase.